The following is a 676-amino-acid chain: Protein cereblon (676 aa).

A compositionally biased stretch (acidic residues) spans 1 to 11 (MDDEETAEIDE). Disordered stretches follow at residues 1-78 (MDDE…TTAH), 118-194 (EDAG…AVPR), and 249-276 (DDAN…LDVD). Low complexity-rich tracts occupy residues 12-33 (TSSS…TETA) and 125-139 (VPQN…TPPA). Residues 156–177 (LVNNDSPSQASISSRHSGSDMS) are compositionally biased toward polar residues. The Lon N-terminal domain occupies 314-542 (RMLIFMHQHI…IIGTTLKHES (229 aa)). A CULT domain is found at 541–650 (ESLFYCRYCN…LAGSSVRIGK (110 aa)). 4 residues coordinate Zn(2+): Cys-546, Cys-549, Cys-615, and Cys-618.

The protein belongs to the CRBN family. Likely a component of a DCX (DDB1-CUL4-X-box) protein ligase complex. May interact with pic/DDB1. Post-translationally, ubiquitinated.

It is found in the nucleus. The protein operates within protein modification; protein ubiquitination. Substrate recognition component of a DCX (DDB1-CUL4-X-box) E3 protein ligase complex that mediates the ubiquitination and subsequent proteasomal degradation of target proteins. Has an essential role in mediating growth by negatively regulating insulin signaling. It also has a role in maintaining presynaptic function in the neuromuscular junction synapses of third-instar larvae. The polypeptide is Protein cereblon (Drosophila mojavensis (Fruit fly)).